Here is a 554-residue protein sequence, read N- to C-terminus: Guanine nucleotide-binding protein alpha-2 subunit (554 aa).

Disordered regions lie at residues 1–139 (MGLC…NNSN) and 157–183 (VNGNSTNSDKALSNQFDQSNNSETHSG). The N-myristoyl glycine moiety is linked to residue G2. C4 carries S-palmitoyl cysteine lipidation. Composition is skewed to basic and acidic residues over residues 7–17 (KDSRESTHDGG) and 28–43 (ANRRNDVRKGAGDKKQ). A compositionally biased stretch (low complexity) spans 52–66 (GSIVNAASNINNSSS). Residues 67–85 (GKTKISTVSEDGTVSNGVG) are compositionally biased toward polar residues. The span at 91–139 (DNANNKNNGNNNNSNNNDNNNNNNNNIGNNINGNNNNDSENIHDSNNSN) shows a compositional bias: low complexity. Positions 228-554 (NALKVLLLGS…ENSLKDSGVL (327 aa)) constitute a G-alpha domain. The segment at 231–244 (KVLLLGSGESGKST) is G1 motif. Residues E239, S240, G241, K242, S243, T244, D351, I376, T382, G405, N471, K472, D474, and A526 each contribute to the GTP site. S243 serves as a coordination point for Mg(2+). The G2 motif stretch occupies residues 374-382 (DVIRTRKKT). Residue T382 coordinates Mg(2+). Positions 398-407 (LHFFDVGGQR) are G3 motif. Residues 467–474 (VLFLNKID) are G4 motif. The tract at residues 524-529 (TQATDT) is G5 motif.

It belongs to the G-alpha family. In terms of assembly, g proteins are composed of 3 units; alpha, beta and gamma. The alpha chain contains the guanine nucleotide binding site. It depends on Mg(2+) as a cofactor.

Guanine nucleotide-binding proteins (G proteins) are involved as modulators or transducers in various transmembrane signaling systems. This protein may be involved in the determination of the cAMP level according to nutritional conditions, most probably as a regulator of adenylyl cyclase. The protein is Guanine nucleotide-binding protein alpha-2 subunit (GPA2) of Kluyveromyces lactis (strain ATCC 8585 / CBS 2359 / DSM 70799 / NBRC 1267 / NRRL Y-1140 / WM37) (Yeast).